Here is a 96-residue protein sequence, read N- to C-terminus: Large ribosomal subunit protein uL23 (96 aa).

Belongs to the universal ribosomal protein uL23 family. Part of the 50S ribosomal subunit. Contacts protein L29, and trigger factor when it is bound to the ribosome.

Functionally, one of the early assembly proteins it binds 23S rRNA. One of the proteins that surrounds the polypeptide exit tunnel on the outside of the ribosome. Forms the main docking site for trigger factor binding to the ribosome. This chain is Large ribosomal subunit protein uL23, found in Onion yellows phytoplasma (strain OY-M).